Here is a 303-residue protein sequence, read N- to C-terminus: Probable 5-dehydro-4-deoxyglucarate dehydratase (303 aa).

This sequence belongs to the DapA family.

It carries out the reaction 5-dehydro-4-deoxy-D-glucarate + H(+) = 2,5-dioxopentanoate + CO2 + H2O. It participates in carbohydrate acid metabolism; D-glucarate degradation; 2,5-dioxopentanoate from D-glucarate: step 2/2. The polypeptide is Probable 5-dehydro-4-deoxyglucarate dehydratase (Leptothrix cholodnii (strain ATCC 51168 / LMG 8142 / SP-6) (Leptothrix discophora (strain SP-6))).